The primary structure comprises 298 residues: Acetyl-coenzyme A carboxylase carboxyl transferase subunit beta 1 (298 aa).

In terms of domain architecture, CoA carboxyltransferase N-terminal spans 26 to 294; sequence MWVKCPSCGD…RAADVQNAPA (269 aa). Zn(2+)-binding residues include C30, C33, C49, and C51. The C4-type zinc finger occupies 30–51; it reads CPSCGDLIYTRQFSDNLKVCKC.

This sequence belongs to the AccD/PCCB family. As to quaternary structure, acetyl-CoA carboxylase is a heterohexamer composed of biotin carboxyl carrier protein (AccB), biotin carboxylase (AccC) and two subunits each of ACCase subunit alpha (AccA) and ACCase subunit beta (AccD). Zn(2+) serves as cofactor.

Its subcellular location is the cytoplasm. It catalyses the reaction N(6)-carboxybiotinyl-L-lysyl-[protein] + acetyl-CoA = N(6)-biotinyl-L-lysyl-[protein] + malonyl-CoA. Its pathway is lipid metabolism; malonyl-CoA biosynthesis; malonyl-CoA from acetyl-CoA: step 1/1. Component of the acetyl coenzyme A carboxylase (ACC) complex. Biotin carboxylase (BC) catalyzes the carboxylation of biotin on its carrier protein (BCCP) and then the CO(2) group is transferred by the transcarboxylase to acetyl-CoA to form malonyl-CoA. In Roseiflexus castenholzii (strain DSM 13941 / HLO8), this protein is Acetyl-coenzyme A carboxylase carboxyl transferase subunit beta 1.